We begin with the raw amino-acid sequence, 103 residues long: Ig lambda chain C region (103 aa).

Residues 6-99 (PTITLFPPSK…NGTSITKTLK (94 aa)) form the Ig-like domain. The cysteines at positions 28 and 85 are disulfide-linked.

This is Ig lambda chain C region from Gallus gallus (Chicken).